A 444-amino-acid chain; its full sequence is Methylenetetrahydrofolate--tRNA-(uracil-5-)-methyltransferase TrmFO (444 aa).

10–15 (GAGLAG) is a binding site for FAD.

Belongs to the MnmG family. TrmFO subfamily. FAD serves as cofactor.

The protein resides in the cytoplasm. The enzyme catalyses uridine(54) in tRNA + (6R)-5,10-methylene-5,6,7,8-tetrahydrofolate + NADH + H(+) = 5-methyluridine(54) in tRNA + (6S)-5,6,7,8-tetrahydrofolate + NAD(+). It catalyses the reaction uridine(54) in tRNA + (6R)-5,10-methylene-5,6,7,8-tetrahydrofolate + NADPH + H(+) = 5-methyluridine(54) in tRNA + (6S)-5,6,7,8-tetrahydrofolate + NADP(+). Functionally, catalyzes the folate-dependent formation of 5-methyl-uridine at position 54 (M-5-U54) in all tRNAs. This is Methylenetetrahydrofolate--tRNA-(uracil-5-)-methyltransferase TrmFO from Streptococcus pneumoniae (strain ATCC 700669 / Spain 23F-1).